The primary structure comprises 372 residues: Bifunctional enzyme IspD/IspF (372 aa).

Residues 1 to 211 are 2-C-methyl-D-erythritol 4-phosphate cytidylyltransferase; it reads MLDISLIMLG…SALKAPENEL (211 aa). Positions 212-372 are 2-C-methyl-D-erythritol 2,4-cyclodiphosphate synthase; it reads FVGSGFDVHE…SLKFYNWTQI (161 aa). A divalent metal cation-binding residues include D218 and H220. 4-CDP-2-C-methyl-D-erythritol 2-phosphate-binding positions include 218–220 and 244–245; these read DVH and HS. H252 is a binding site for a divalent metal cation. Residues 266–268, 271–275, 342–345, F349, and R352 contribute to the 4-CDP-2-C-methyl-D-erythritol 2-phosphate site; these read DIG, FPDTD, and TTTE.

In the N-terminal section; belongs to the IspD/TarI cytidylyltransferase family. IspD subfamily. The protein in the C-terminal section; belongs to the IspF family. The cofactor is a divalent metal cation.

The enzyme catalyses 2-C-methyl-D-erythritol 4-phosphate + CTP + H(+) = 4-CDP-2-C-methyl-D-erythritol + diphosphate. The catalysed reaction is 4-CDP-2-C-methyl-D-erythritol 2-phosphate = 2-C-methyl-D-erythritol 2,4-cyclic diphosphate + CMP. Its pathway is isoprenoid biosynthesis; isopentenyl diphosphate biosynthesis via DXP pathway; isopentenyl diphosphate from 1-deoxy-D-xylulose 5-phosphate: step 2/6. The protein operates within isoprenoid biosynthesis; isopentenyl diphosphate biosynthesis via DXP pathway; isopentenyl diphosphate from 1-deoxy-D-xylulose 5-phosphate: step 4/6. Its function is as follows. Bifunctional enzyme that catalyzes the formation of 4-diphosphocytidyl-2-C-methyl-D-erythritol from CTP and 2-C-methyl-D-erythritol 4-phosphate (MEP) (IspD), and catalyzes the conversion of 4-diphosphocytidyl-2-C-methyl-D-erythritol 2-phosphate (CDP-ME2P) to 2-C-methyl-D-erythritol 2,4-cyclodiphosphate (ME-CPP) with a corresponding release of cytidine 5-monophosphate (CMP) (IspF). In Campylobacter concisus (strain 13826), this protein is Bifunctional enzyme IspD/IspF.